We begin with the raw amino-acid sequence, 688 residues long: Sodium channel and clathrin linker 1 (688 aa).

A2 is modified (N-acetylalanine). Positions 69–673 (ELNGQLKYYQ…SASQQLSVIT (605 aa)) form a coiled coil. S681 is modified (phosphoserine).

As to quaternary structure, interacts with SCN10A and clathrin. Identified in a complex containing SCN10A, clathrin and SCLT1.

The protein localises to the cytoplasm. Its subcellular location is the cytoskeleton. It localises to the microtubule organizing center. It is found in the centrosome. The protein resides in the centriole. Functionally, adapter protein that links SCN10A to clathrin. Regulates SCN10A channel activity, possibly by promoting channel internalization. In Homo sapiens (Human), this protein is Sodium channel and clathrin linker 1 (SCLT1).